The primary structure comprises 87 residues: Large ribosomal subunit protein bL27 (87 aa).

The protein belongs to the bacterial ribosomal protein bL27 family.

This Paenarthrobacter aurescens (strain TC1) protein is Large ribosomal subunit protein bL27.